Here is a 715-residue protein sequence, read N- to C-terminus: ATP-binding cassette sub-family B member 10, mitochondrial (715 aa).

The N-terminal 82 residues, 1 to 82 (MRAPSARALL…SSGARRCWVL (82 aa)), are a transit peptide targeting the mitochondrion. The Mitochondrial matrix portion of the chain corresponds to 83-133 (AGPRAAHPLFARLQGAAATGVRDLGNDSQRRPAATGRSEVWKLLGLVRPER). The helical transmembrane segment at 134–157 (GRLSAAVGFLAVSSVITMSAPFFL) threads the bilayer. Residues 136–422 (LSAAVGFLAV…LSSFYSELMK (287 aa)) enclose the ABC transmembrane type-1 domain. Over 158-178 (GRIIDVIYTNPSEGYGDSLTR) the chain is Mitochondrial intermembrane. Residues 179–201 (LCAVLTCVFLCGAAANGIRVYLM) traverse the membrane as a helical segment. Over 202–252 (QSSGQSIVNRLRTSLFSSILRQEVAFFDKTRTGELINRLSSDTALLGRSVT) the chain is Mitochondrial matrix. Position 230 is an N6-acetyllysine (Lys230). Residues 253 to 275 (ENLSDGLRAGAQASVGVGMMFFV) traverse the membrane as a helical segment. Residues 276–278 (SPS) are Mitochondrial intermembrane-facing. The chain crosses the membrane as a helical span at residues 279–298 (LATFVLSVVPPISVLAVIYG). Residues 299–357 (RYLRKLSKATQDSLAEATQLAEERIGNIRTIRAFGKEMTEVEKYTGRVDQLLQLAQKEA) are Mitochondrial matrix-facing. The chain crosses the membrane as a helical span at residues 358 to 381 (LARAGFFGAAGLSGNLIVLSVLYK). Residues 382 to 395 (GGLLMGSAHMTVGE) are Mitochondrial intermembrane-facing. Residues 396 to 417 (LSSFLMYAFWVGLSIGGLSSFY) form a helical membrane-spanning segment. At 418–715 (SELMKGLGAG…AEQFLEPARA (298 aa)) the chain is on the mitochondrial matrix side. Residues 457-696 (LEFRNVHFTY…PNGLYRKLMN (240 aa)) enclose the ABC transporter domain. ATP contacts are provided by Gly495, Gly497, Lys498, Ser499, and Thr500. Ser499 provides a ligand contact to Mg(2+). Cys547 carries the S-glutathionyl cysteine modification. Residue Asp623 coordinates Mg(2+).

Belongs to the ABC transporter superfamily. ABCB family. Mitochondrial peptide exporter (TC 3.A.1.212) subfamily. Homodimer or homooligomer. Interacts with PAAT; this interaction regulates ABCB10. Interacts with SLC25A37; this interaction stabilizes SLC25A37 and enhances the function of SLC25A37 to import mitochondrial iron during erythroid differentiation. Interacts with FECH; this interaction may allow the formation of the oligomeric complex with SLC25A37. Forms a complex with ABCB7 and FECH, where a dimeric FECH bridges ABCB7 and ABCB10 homodimers; this complex may be required for cellular iron homeostasis, mitochondrial function and heme biosynthesis. In terms of tissue distribution, expressed at particularly high levels in fetal liver, and erythroid tissues of embryos and adults. Found also in adult bone marrow, liver and kidney, and at lower levels in heart, brain and spleen.

Its subcellular location is the mitochondrion inner membrane. The catalysed reaction is biliverdin IXalpha(in) + ATP + H2O = biliverdin IXalpha(out) + ADP + phosphate + H(+). Its activity is regulated as follows. Oxidized glutathione (GSSG) stimulates ATP hydrolysis without affecting ATP binding, whereas reduced glutathione (GSH) inhibits ATP binding and hydrolysis. Its function is as follows. ATP-dependent transporter located in the mitochondrial inner membrane that catalyzes the export of biliverdin from the mitochondrial matrix, and plays a crucial role in hemoglobin synthesis and antioxidative stress. Participates in the early step of the heme biosynthetic process during insertion of iron into protoporphyrin IX (PPIX). Involved in the stabilization of the iron transporter mitoferrin-1/SLC25A37. In addition may be involved in mitochondrial unfolded protein response (UPRmt) signaling pathway, although ABCB10 probably does not participate in peptide export from mitochondria. This chain is ATP-binding cassette sub-family B member 10, mitochondrial, found in Mus musculus (Mouse).